The chain runs to 315 residues: Thioredoxin reductase (315 aa).

45 to 52 contacts FAD; sequence EGSTPGGK. Cys145 and Cys148 are disulfide-bonded. 288–297 is a binding site for FAD; sequence DCRSKHFRQI.

This sequence belongs to the class-II pyridine nucleotide-disulfide oxidoreductase family. As to quaternary structure, homodimer. The cofactor is FAD.

It localises to the cytoplasm. It catalyses the reaction [thioredoxin]-dithiol + NADP(+) = [thioredoxin]-disulfide + NADPH + H(+). This is Thioredoxin reductase (trxB) from Mycoplasma pneumoniae (strain ATCC 29342 / M129 / Subtype 1) (Mycoplasmoides pneumoniae).